The following is a 361-amino-acid chain: U7 snRNA-associated Sm-like protein LSm11 (361 aa).

Residues 1 to 26 are disordered; that stretch reads MEEREWGARSARAGSPASPPSPRLDV. Phosphoserine is present on residues Ser-15 and Ser-21. The residue at position 41 (Arg-41) is an Omega-N-methylarginine. Residues 67 to 142 form a disordered region; it reads RTGRGRARGT…QGPGRSKKAP (76 aa). The span at 76-96 shows a compositional bias: low complexity; sequence TGEPASAGTSTGTSTGAGSSS. A Glycyl lysine isopeptide (Lys-Gly) (interchain with G-Cter in SUMO2) cross-link involves residue Lys-121. The residue at position 155 (Ser-155) is a Phosphoserine. The Sm domain maps to 155-230; sequence SPLGELHRCI…LTLTRLFDRL (76 aa). An SM 1 region spans residues 172-205; that stretch reads VHIRTFKGLRGVCTGFLVAFDKFWNMALTDVDET. Residues 268–335 are disordered; it reads RGDTDRSSHR…RKKKRKPKVD (68 aa). Ser-281 bears the Phosphoserine mark. The span at 307 to 323 shows a compositional bias: polar residues; it reads GSSVGGTFSRATTLSRG. The tract at residues 344-357 is SM 2; sequence INQIFIRGENVLLV.

It belongs to the snRNP Sm proteins family. Component of the heptameric ring U7 snRNP complex, or U7 Sm protein core complex, at least composed of LSM10, LSM11, SNRPB, SNRPD3, SNRPE, SNRPF, SNRPG and U7 snRNA. Formation of the U7 snRNP is an ATP-dependent process mediated by a specialized SMN complex containing at least the Sm protein core complex and additionally, the U7-specific LSM10 and LSM11 proteins. Identified in a histone pre-mRNA complex, at least composed of ERI1, LSM11, SLBP, SNRPB, SYNCRIP and YBX1. Interacts (via the Sm domains) with CLNS1A. Interacts with PRMT5, SMN, ZNF473 and WDR77. Post-translationally, not methylated.

It localises to the nucleus. In terms of biological role, component of the U7 snRNP complex that is involved in the histone 3'-end pre-mRNA processing. Increases U7 snRNA levels but not histone 3'-end pre-mRNA processing activity, when overexpressed. Required for cell cycle progression from G1 to S phases. Binds specifically to the Sm-binding site of U7 snRNA. The chain is U7 snRNA-associated Sm-like protein LSm11 from Mus musculus (Mouse).